A 152-amino-acid polypeptide reads, in one-letter code: UPF0756 membrane protein EF_1246 (152 aa).

Transmembrane regions (helical) follow at residues 4 to 24 (WLFL…SLLI), 52 to 72 (LGVT…QIGL), 85 to 105 (WLGI…VGLI), and 115 to 135 (LVFG…GPII).

This sequence belongs to the UPF0756 family.

It is found in the cell membrane. The sequence is that of UPF0756 membrane protein EF_1246 from Enterococcus faecalis (strain ATCC 700802 / V583).